The sequence spans 160 residues: Large ribosomal subunit protein uL11 (160 aa).

It belongs to the universal ribosomal protein uL11 family. In terms of assembly, part of the ribosomal stalk of the 50S ribosomal subunit. Interacts with L10 and the large rRNA to form the base of the stalk. L10 forms an elongated spine to which L12 dimers bind in a sequential fashion forming a multimeric L10(L12)X complex.

In terms of biological role, forms part of the ribosomal stalk which helps the ribosome interact with GTP-bound translation factors. The sequence is that of Large ribosomal subunit protein uL11 from Nanoarchaeum equitans (strain Kin4-M).